The primary structure comprises 76 residues: uncharacterized protein (76 aa).

This is an uncharacterized protein from Saccharomyces cerevisiae (strain ATCC 204508 / S288c) (Baker's yeast).